Here is a 247-residue protein sequence, read N- to C-terminus: PF03932 family protein CutC (247 aa).

This sequence belongs to the CutC family.

It localises to the cytoplasm. This is PF03932 family protein CutC from Chromobacterium violaceum (strain ATCC 12472 / DSM 30191 / JCM 1249 / CCUG 213 / NBRC 12614 / NCIMB 9131 / NCTC 9757 / MK).